Reading from the N-terminus, the 234-residue chain is Probable transcriptional regulatory protein PFL_3960 (234 aa).

This sequence belongs to the TACO1 family.

It localises to the cytoplasm. This chain is Probable transcriptional regulatory protein PFL_3960, found in Pseudomonas fluorescens (strain ATCC BAA-477 / NRRL B-23932 / Pf-5).